Consider the following 658-residue polypeptide: Threonine--tRNA ligase (658 aa).

In terms of domain architecture, TGS spans 1-64 (MSNTVSLQFP…GASGKVEIIT (64 aa)). The catalytic stretch occupies residues 246 to 548 (DHRRLGREMD…LIENFAGHMP (303 aa)). Residues cysteine 343, histidine 394, and histidine 525 each coordinate Zn(2+).

This sequence belongs to the class-II aminoacyl-tRNA synthetase family. In terms of assembly, homodimer. It depends on Zn(2+) as a cofactor.

It localises to the cytoplasm. The catalysed reaction is tRNA(Thr) + L-threonine + ATP = L-threonyl-tRNA(Thr) + AMP + diphosphate + H(+). Catalyzes the attachment of threonine to tRNA(Thr) in a two-step reaction: L-threonine is first activated by ATP to form Thr-AMP and then transferred to the acceptor end of tRNA(Thr). Also edits incorrectly charged L-seryl-tRNA(Thr). This Brucella canis (strain ATCC 23365 / NCTC 10854 / RM-666) protein is Threonine--tRNA ligase.